The chain runs to 206 residues: MELKLLNDQGAQSATLQASDALFGRDYNEALIHQVVVAYMANARSGNRAQKGRAEVSKSTRKPWRQKGTGRARAGMASSPLWRGGGRVFPNSPEDNFSQKLNRKMYRAGVASILSQLAREDRLAIVENFSVEAPKTRLLSQKLKGMGLDSVLVITDEFDENLFLSSRNLHKVLVLEVSETDPVSLVHYDRVIVTKGALAKMEEAWQ.

The disordered stretch occupies residues 47-94 (NRAQKGRAEVSKSTRKPWRQKGTGRARAGMASSPLWRGGGRVFPNSPE). The segment covering 59 to 70 (STRKPWRQKGTG) has biased composition (basic residues).

The protein belongs to the universal ribosomal protein uL4 family. In terms of assembly, part of the 50S ribosomal subunit.

In terms of biological role, one of the primary rRNA binding proteins, this protein initially binds near the 5'-end of the 23S rRNA. It is important during the early stages of 50S assembly. It makes multiple contacts with different domains of the 23S rRNA in the assembled 50S subunit and ribosome. Functionally, forms part of the polypeptide exit tunnel. The protein is Large ribosomal subunit protein uL4 of Aromatoleum aromaticum (strain DSM 19018 / LMG 30748 / EbN1) (Azoarcus sp. (strain EbN1)).